A 58-amino-acid polypeptide reads, in one-letter code: ADVPGNYPLDKDGNTYTCLKLGENKDCQKVCKLHGVQYGYCYAFECWCKEYLDDKDSV.

The region spanning 3–58 is the LCN-type CS-alpha/beta domain; the sequence is VPGNYPLDKDGNTYTCLKLGENKDCQKVCKLHGVQYGYCYAFECWCKEYLDDKDSV. 3 disulfide bridges follow: cysteine 18-cysteine 41, cysteine 27-cysteine 46, and cysteine 31-cysteine 48.

Expressed by the venom gland.

The protein localises to the secreted. Functionally, binds to sodium channels (Nav) and affects the channel activation process. In mice, causes hyperactivity that persists until death. This Parabuthus transvaalicus (Transvaal thick-tailed scorpion) protein is Dortoxin.